Here is a 239-residue protein sequence, read N- to C-terminus: DNA oxidative demethylase ALKBH2 (239 aa).

Positions 3–7 match the PCNA-binding motif; that stretch reads KFLVR. The segment at 11–32 is disordered; sequence RDLQGGGEEPAPTGGASGDLKS. Substrate contacts are provided by residues 80 to 82 and 100 to 102; these read FGK and YTF. The region spanning 130-235 is the Fe2OG dioxygenase domain; it reads TFNFVLVNRY…RVNLTFRKIL (106 aa). 2-oxoglutarate is bound by residues Asn137, Tyr139, and His149. Fe cation is bound by residues His149 and Asp151. A substrate-binding site is contributed by Asp152. Residues His214, Arg226, Thr230, and Arg232 each contribute to the 2-oxoglutarate site. Residue His214 coordinates Fe cation.

It belongs to the alkB family. Interacts with PCNA homotrimer; this interaction is enhanced during the S-phase of the cell cycle. Interacts with nucleolar proteins NCL, UBTF and NPM1. Interacts with XRCC5-XRCC6 heterodimer. Fe(2+) serves as cofactor. In terms of tissue distribution, detected in liver, testis and kidney (at protein level). Detected in heart and testis.

Its subcellular location is the nucleus. It is found in the nucleolus. It localises to the nucleoplasm. The catalysed reaction is a methylated nucleobase within DNA + 2-oxoglutarate + O2 = a nucleobase within DNA + formaldehyde + succinate + CO2. It carries out the reaction an N(1)-methyl-2'-deoxyadenosine in double-stranded DNA + 2-oxoglutarate + O2 = a 2'-deoxyadenosine in double-stranded DNA + formaldehyde + succinate + CO2 + H(+). It catalyses the reaction an N(1)-methyl-2'-deoxyadenosine in single-stranded DNA + 2-oxoglutarate + O2 = a 2'-deoxyadenosine in single-stranded DNA + formaldehyde + succinate + CO2 + H(+). The enzyme catalyses an N(3)-methyl-2'-deoxycytidine in double-stranded DNA + 2-oxoglutarate + O2 = a 2'-deoxycytidine in double-stranded DNA + formaldehyde + succinate + CO2 + H(+). The catalysed reaction is an N(3)-methyl-2'-deoxycytidine in single-stranded DNA + 2-oxoglutarate + O2 = a 2'-deoxycytidine in single-stranded DNA + formaldehyde + succinate + CO2 + H(+). It carries out the reaction a 1,N(6)-etheno-2'-deoxyadenosine in double-stranded DNA + 2-oxoglutarate + O2 + H2O = a 2'-deoxyadenosine in double-stranded DNA + glyoxal + succinate + CO2. It catalyses the reaction a 1,N(6)-etheno-2'-deoxyadenosine in single-stranded DNA + 2-oxoglutarate + O2 + H2O = a 2'-deoxyadenosine in single-stranded DNA + glyoxal + succinate + CO2. The enzyme catalyses a 3,N(4)-etheno-2'-deoxycytidine in double-stranded DNA + 2-oxoglutarate + O2 + H2O = a 2'-deoxycytidine in double-stranded DNA + glyoxal + succinate + CO2. The catalysed reaction is a 3,N(4)-etheno-2'-deoxycytidine in single-stranded DNA + 2-oxoglutarate + O2 + H2O = a 2'-deoxycytidine in single-stranded DNA + glyoxal + succinate + CO2. It carries out the reaction a 1,N(2)-etheno-2'-deoxyguanosine in double-stranded DNA + 2-oxoglutarate + O2 + H2O = a 2'-deoxyguanosine in double-stranded DNA + glyoxal + succinate + CO2. Its activity is regulated as follows. Activated by magnesium ions. Functionally, dioxygenase that repairs alkylated nucleic acid bases by direct reversal oxidative dealkylation. Can process both double-stranded (ds) and single-stranded (ss) DNA substrates, with a strong preference for dsDNA. Uses molecular oxygen, 2-oxoglutarate and iron as cofactors to oxidize the alkyl groups that are subsequently released as aldehydes, regenerating the undamaged bases. Probes the base pair stability, locates a weakened base pair and flips the damaged base to accommodate the lesion in its active site for efficient catalysis. Repairs monoalkylated bases, specifically N1-methyladenine and N3-methylcytosine, as well as higher order alkyl adducts such as bases modified with exocyclic bridged adducts known as etheno adducts including 1,N6-ethenoadenine, 3,N4-ethenocytosine and 1,N2-ethenoguanine. Acts as a gatekeeper of genomic integrity under alkylation stress. Efficiently repairs alkylated lesions in ribosomal DNA (rDNA). These lesions can cause ss- and dsDNA strand breaks that severely impair rDNA transcription. In a response mechanism to DNA damage, associates with PCNA at replication forks to repair alkylated adducts prior to replication. In Mus musculus (Mouse), this protein is DNA oxidative demethylase ALKBH2 (Alkbh2).